The sequence spans 522 residues: Amphoterin-induced protein 2 (522 aa).

An N-terminal signal peptide occupies residues 1-39; that stretch reads MSLRVHTLPTLLGAVVRPGCRELLCLLMITVTVGPGASG. An LRRNT domain is found at 40–68; the sequence is VCPTACICATDIVSCTNKNLSKVPGNLFR. The Extracellular portion of the chain corresponds to 40–398; sequence VCPTACICAT…RSHAHEAFNT (359 aa). Intrachain disulfides connect cysteine 41-cysteine 47 and cysteine 45-cysteine 54. An N-linked (GlcNAc...) asparagine glycan is attached at asparagine 58. LRR repeat units lie at residues 69–90, 94–115, 118–139, 142–163, 166–187, and 193–214; these read LIKR…WIPV, KLNT…SFST, NLKC…VFQE, VLEV…AFGG, QLQK…LYVG, and ELMF…HINL. Asparagine 104 carries an N-linked (GlcNAc...) asparagine glycan. Residues 228-284 enclose the LRRCT domain; sequence NPFVCDCSLYSLLVFWYRRHFSSVMDFKNDYTCRLWSDSRHSRQVLLLQDSFMNCSD. 2 disulfides stabilise this stretch: cysteine 232-cysteine 260 and cysteine 234-cysteine 282. N-linked (GlcNAc...) asparagine glycosylation is found at asparagine 281, asparagine 288, asparagine 345, asparagine 373, asparagine 381, and asparagine 384. The region spanning 289–379 is the Ig-like C2-type domain; the sequence is GSFRALGFIH…RLLNETVDVT (91 aa). A disulfide bond links cysteine 310 and cysteine 363. The chain crosses the membrane as a helical span at residues 399–419; that stretch reads AFTTLAACVASIVLVLLYLYL. Over 420–522 the chain is Cytoplasmic; that stretch reads TPCPCKCKTK…FSDTPFVAST (103 aa). The segment at 501–522 is disordered; that stretch reads RGKSDSDSVNSVFSDTPFVAST.

This sequence belongs to the immunoglobulin superfamily. AMIGO family. Binds itself as well as AMIGO1 and AMIGO3. Highest levels in breast, ovary, cervix, and uterus. Lower levels in lung, colon, and rectum. Differentially expressed in 56% of thyroid, 57% of pancreatic and 45% of stomach cancers.

The protein resides in the cell membrane. Its subcellular location is the nucleus. In terms of biological role, required for depolarization-dependent survival of cultured cerebellar granule neurons. May mediate homophilic as well as heterophilic cell-cell interaction with AMIGO1 or AMIGO3. May contribute to signal transduction through its intracellular domain. May be required for tumorigenesis of a subset of gastric adenocarcinomas. The protein is Amphoterin-induced protein 2 of Homo sapiens (Human).